Consider the following 213-residue polypeptide: Orotate phosphoribosyltransferase (213 aa).

Position 26 (Lys26) interacts with 5-phospho-alpha-D-ribose 1-diphosphate. Residue Phe34–Phe35 participates in orotate binding. 5-phospho-alpha-D-ribose 1-diphosphate is bound by residues Tyr72–Lys73, Arg99, Lys100, Lys103, His105, and Asp124–Ala132. Residues Thr128 and Arg156 each coordinate orotate.

The protein belongs to the purine/pyrimidine phosphoribosyltransferase family. PyrE subfamily. Homodimer. The cofactor is Mg(2+).

It catalyses the reaction orotidine 5'-phosphate + diphosphate = orotate + 5-phospho-alpha-D-ribose 1-diphosphate. Its pathway is pyrimidine metabolism; UMP biosynthesis via de novo pathway; UMP from orotate: step 1/2. Functionally, catalyzes the transfer of a ribosyl phosphate group from 5-phosphoribose 1-diphosphate to orotate, leading to the formation of orotidine monophosphate (OMP). In Vibrio atlanticus (strain LGP32) (Vibrio splendidus (strain Mel32)), this protein is Orotate phosphoribosyltransferase.